Reading from the N-terminus, the 194-residue chain is Flagellin A2 (194 aa).

The propeptide occupies 1–12 (MFEFITDEDERG).

Belongs to the archaeal flagellin family. Post-translationally, glycosylated.

The protein resides in the archaeal flagellum. Its function is as follows. Flagellin is the subunit protein which polymerizes to form the filaments of archaeal flagella. The protein is Flagellin A2 (flaA2) of Halobacterium salinarum (strain ATCC 700922 / JCM 11081 / NRC-1) (Halobacterium halobium).